The chain runs to 320 residues: MGKSMTALRVIGDIGGTYARFAVAERGKYSELQHLSVSKYAALKDALGEYLAALPRDLRPTRGALAVAGPVSGDEVKLTNLNWSFSITALKADLGMSSLVVVNDFAATAMSVPYLPEADCYPIGPPQSKTSGPVGVIGPGTGLGVSALVPDAGRWILLPGEGGHSTLPPATQAESLIVEVLRTHWPHVSAERALSGAGLVNLYQALCSIEGKRPDPLSPADVTDRAMRGSDPTCVKAFEVFCSMLGTVAGDLALTIGATGGIYIAGGILLRFKEAFASSPFRDRFEDKGRFQDYLRRIPTLLILEESPALLGLANLPLEP.

12 to 17 (GDIGGT) provides a ligand contact to ATP.

This sequence belongs to the bacterial glucokinase family.

The protein localises to the cytoplasm. The enzyme catalyses D-glucose + ATP = D-glucose 6-phosphate + ADP + H(+). In Nitrobacter hamburgensis (strain DSM 10229 / NCIMB 13809 / X14), this protein is Glucokinase.